The sequence spans 358 residues: Uptake hydrogenase small subunit (358 aa).

The first 45 residues, 1–45, serve as a signal peptide directing secretion; sequence MSDIETFYDVMRRQGITRRSFMKSVRSPQHVLGLGPSFVPKIGEA. [4Fe-4S] cluster is bound by residues Cys-62, Cys-65, Cys-160, Cys-194, His-232, Cys-235, Cys-260, and Cys-266. [3Fe-4S] cluster contacts are provided by Cys-275, Cys-294, and Cys-297.

This sequence belongs to the [NiFe]/[NiFeSe] hydrogenase small subunit family. As to quaternary structure, heterodimer of a large and a small subunit. Requires [4Fe-4S] cluster as cofactor. [3Fe-4S] cluster is required as a cofactor.

It is found in the cell membrane. The enzyme catalyses H2 + A = AH2. In terms of biological role, this enzyme recycles the H(2) produced by nitrogenase to increase the production of ATP and to protect nitrogenase against inhibition or damage by O(2) under carbon- or phosphate-limited conditions. The polypeptide is Uptake hydrogenase small subunit (hupA) (Rhodobacter capsulatus (Rhodopseudomonas capsulata)).